Consider the following 382-residue polypeptide: Galactose-1-phosphate uridylyltransferase (382 aa).

The Zn(2+) site is built by cysteine 52 and cysteine 55. UDP-alpha-D-glucose is bound by residues alanine 61 and asparagine 77–aspartate 78. Histidine 121 contacts Zn(2+). A UDP-alpha-D-glucose-binding site is contributed by asparagine 185. Histidine 196 contacts Zn(2+). Residue histidine 198 is the Tele-UMP-histidine intermediate of the active site. Glutamine 200 provides a ligand contact to UDP-alpha-D-glucose. The Fe cation site is built by glutamate 214, histidine 313, histidine 330, and histidine 332. Residues lysine 345–valine 348 and phenylalanine 350–glutamate 351 each bind UDP-alpha-D-glucose.

Belongs to the galactose-1-phosphate uridylyltransferase type 1 family. Homodimer. Requires Zn(2+) as cofactor.

The catalysed reaction is alpha-D-galactose 1-phosphate + UDP-alpha-D-glucose = alpha-D-glucose 1-phosphate + UDP-alpha-D-galactose. Its pathway is carbohydrate metabolism; galactose metabolism. Its function is as follows. Essential for growth on galactose but not for cellulase induction. The polypeptide is Galactose-1-phosphate uridylyltransferase (gal7) (Hypocrea jecorina (Trichoderma reesei)).